The sequence spans 618 residues: ADP,ATP carrier protein 2, chloroplastic (618 aa).

The N-terminal 76 residues, 1-76, are a transit peptide targeting the chloroplast; the sequence is MEGLIQTRGI…KERSRGFICK (76 aa). Position 77 is an N-acetylalanine (A77). Helical transmembrane passes span 110–130, 148–168, 179–199, 237–257, 270–289, 312–332, 368–388, 401–421, 441–461, 464–484, and 542–562; these read LKKI…YTIL, IIPF…MLLY, ALFY…GFVM, LFYV…FWGF, FYPL…GRTV, AMMS…WWVN, LATL…TWKS, SAFM…MMLL, VLLL…PFAP, AKLG…QNIF, and LANS…AWLA. The segment at 586–618 is disordered; that stretch reads RASSVKIPVVSQEDAPSGETTSQLSEKSTPTGI. Residues 603-618 show a composition bias toward polar residues; sequence GETTSQLSEKSTPTGI.

Belongs to the ADP/ATP translocase tlc (TC 2.A.12.2) family.

It localises to the plastid. The protein resides in the chloroplast membrane. The chain is ADP,ATP carrier protein 2, chloroplastic (AATP2) from Arabidopsis thaliana (Mouse-ear cress).